The following is a 330-amino-acid chain: DNA-directed RNA polymerase subunit alpha (330 aa).

The tract at residues 1–229 is alpha N-terminal domain (alpha-NTD); sequence MKNIKFIKPF…DHFNVLVELS (229 aa). Residues 245-330 form an alpha C-terminal domain (alpha-CTD) region; sequence AHNSVLDLEI…HSVEEDKDKH (86 aa).

The protein belongs to the RNA polymerase alpha chain family. Homodimer. The RNAP catalytic core consists of 2 alpha, 1 beta, 1 beta' and 1 omega subunit. When a sigma factor is associated with the core the holoenzyme is formed, which can initiate transcription.

The catalysed reaction is RNA(n) + a ribonucleoside 5'-triphosphate = RNA(n+1) + diphosphate. Functionally, DNA-dependent RNA polymerase catalyzes the transcription of DNA into RNA using the four ribonucleoside triphosphates as substrates. The sequence is that of DNA-directed RNA polymerase subunit alpha from Onion yellows phytoplasma (strain OY-M).